Consider the following 259-residue polypeptide: Phosphatidylglycerol--prolipoprotein diacylglyceryl transferase (259 aa).

Transmembrane regions (helical) follow at residues 12 to 32 (LSLHWYAVCILVGLLLAVYLA), 46 to 66 (IIDFILIAFPLAIIGARIYYV), 83 to 103 (IWNGGIAIYGGLITGTIVLFV), and 109 to 129 (VLNPIHFLDIAAPSVMLAQAI). A 1,2-diacyl-sn-glycero-3-phospho-(1'-sn-glycerol) is bound at residue R131. The next 3 helical transmembrane spans lie at 167 to 187 (VPTFLYESMWNLIGFVIIMVW), 194 to 214 (LLDGDILSFYLIWYGCGRLVI), and 226 to 246 (GIRVSQYVSVLLIVIAIVFIF).

It belongs to the Lgt family.

The protein localises to the cell membrane. It catalyses the reaction L-cysteinyl-[prolipoprotein] + a 1,2-diacyl-sn-glycero-3-phospho-(1'-sn-glycerol) = an S-1,2-diacyl-sn-glyceryl-L-cysteinyl-[prolipoprotein] + sn-glycerol 1-phosphate + H(+). It participates in protein modification; lipoprotein biosynthesis (diacylglyceryl transfer). Catalyzes the transfer of the diacylglyceryl group from phosphatidylglycerol to the sulfhydryl group of the N-terminal cysteine of a prolipoprotein, the first step in the formation of mature lipoproteins. The sequence is that of Phosphatidylglycerol--prolipoprotein diacylglyceryl transferase from Streptococcus equi subsp. zooepidemicus (strain MGCS10565).